We begin with the raw amino-acid sequence, 230 residues long: Ribose-5-phosphate isomerase A (230 aa).

Substrate-binding positions include 28-31, 83-86, and 97-100; these read TGST, DGAD, and KGLG. The Proton acceptor role is filled by glutamate 106. Lysine 124 contacts substrate.

This sequence belongs to the ribose 5-phosphate isomerase family. In terms of assembly, homodimer.

The catalysed reaction is aldehydo-D-ribose 5-phosphate = D-ribulose 5-phosphate. It participates in carbohydrate degradation; pentose phosphate pathway; D-ribose 5-phosphate from D-ribulose 5-phosphate (non-oxidative stage): step 1/1. Functionally, catalyzes the reversible conversion of ribose-5-phosphate to ribulose 5-phosphate. The sequence is that of Ribose-5-phosphate isomerase A from Gloeobacter violaceus (strain ATCC 29082 / PCC 7421).